The primary structure comprises 602 residues: Arginine--tRNA ligase (602 aa).

The short motif at alanine 138–histidine 148 is the 'HIGH' region element.

This sequence belongs to the class-I aminoacyl-tRNA synthetase family. Monomer.

It localises to the cytoplasm. The enzyme catalyses tRNA(Arg) + L-arginine + ATP = L-arginyl-tRNA(Arg) + AMP + diphosphate. This is Arginine--tRNA ligase from Gluconobacter oxydans (strain 621H) (Gluconobacter suboxydans).